The sequence spans 205 residues: Putative 3-methyladenine DNA glycosylase (205 aa).

Belongs to the DNA glycosylase MPG family.

This chain is Putative 3-methyladenine DNA glycosylase, found in Bacillus cereus (strain B4264).